Reading from the N-terminus, the 354-residue chain is Ferrochelatase (354 aa).

Fe cation-binding residues include histidine 214 and glutamate 295.

This sequence belongs to the ferrochelatase family.

It localises to the cytoplasm. The catalysed reaction is heme b + 2 H(+) = protoporphyrin IX + Fe(2+). Its pathway is porphyrin-containing compound metabolism; protoheme biosynthesis; protoheme from protoporphyrin-IX: step 1/1. Its function is as follows. Catalyzes the ferrous insertion into protoporphyrin IX. The chain is Ferrochelatase from Burkholderia ambifaria (strain ATCC BAA-244 / DSM 16087 / CCUG 44356 / LMG 19182 / AMMD) (Burkholderia cepacia (strain AMMD)).